We begin with the raw amino-acid sequence, 456 residues long: Methylenetetrahydrofolate--tRNA-(uracil-5-)-methyltransferase TrmFO (456 aa).

Residue 7–12 (GAGLAG) coordinates FAD.

This sequence belongs to the MnmG family. TrmFO subfamily. FAD serves as cofactor.

Its subcellular location is the cytoplasm. It catalyses the reaction uridine(54) in tRNA + (6R)-5,10-methylene-5,6,7,8-tetrahydrofolate + NADH + H(+) = 5-methyluridine(54) in tRNA + (6S)-5,6,7,8-tetrahydrofolate + NAD(+). It carries out the reaction uridine(54) in tRNA + (6R)-5,10-methylene-5,6,7,8-tetrahydrofolate + NADPH + H(+) = 5-methyluridine(54) in tRNA + (6S)-5,6,7,8-tetrahydrofolate + NADP(+). In terms of biological role, catalyzes the folate-dependent formation of 5-methyl-uridine at position 54 (M-5-U54) in all tRNAs. The protein is Methylenetetrahydrofolate--tRNA-(uracil-5-)-methyltransferase TrmFO of Synechococcus sp. (strain RCC307).